A 289-amino-acid chain; its full sequence is ATP synthase subunit gamma, mitochondrial (289 aa).

This sequence belongs to the ATPase gamma chain family. As to quaternary structure, F-type ATPases have 2 components, CF(1) - the catalytic core - and CF(0) - the membrane proton channel. CF(1) has five subunits: alpha(3), beta(3), gamma(1), delta(1), epsilon(1). CF(0) has three main subunits: a, b and c.

Its subcellular location is the mitochondrion. It localises to the mitochondrion inner membrane. Functionally, mitochondrial membrane ATP synthase (F(1)F(0) ATP synthase or Complex V) produces ATP from ADP in the presence of a proton gradient across the membrane which is generated by electron transport complexes of the respiratory chain. F-type ATPases consist of two structural domains, F(1) - containing the extramembraneous catalytic core, and F(0) - containing the membrane proton channel, linked together by a central stalk and a peripheral stalk. During catalysis, ATP synthesis in the catalytic domain of F(1) is coupled via a rotary mechanism of the central stalk subunits to proton translocation. Part of the complex F(1) domain and the central stalk which is part of the complex rotary element. The gamma subunit protrudes into the catalytic domain formed of alpha(3)beta(3). Rotation of the central stalk against the surrounding alpha(3)beta(3) subunits leads to hydrolysis of ATP in three separate catalytic sites on the beta subunits. The chain is ATP synthase subunit gamma, mitochondrial (ATP3) from Kluyveromyces lactis (strain ATCC 8585 / CBS 2359 / DSM 70799 / NBRC 1267 / NRRL Y-1140 / WM37) (Yeast).